The primary structure comprises 92 residues: Envelope glycoprotein J (92 aa).

Residues methionine 1–alanine 22 form the signal peptide. At alanine 23 to glycine 49 the chain is on the extracellular side. N-linked (GlcNAc...) asparagine; by host glycosylation occurs at asparagine 33. A helical transmembrane segment spans residues phenylalanine 50 to leucine 70. Over glutamate 71 to proline 92 the chain is Cytoplasmic.

It belongs to the alphaherpesvirinae glycoprotein J family.

The protein resides in the host Golgi apparatus membrane. Its subcellular location is the host endoplasmic reticulum membrane. It is found in the host endosome membrane. In terms of biological role, functions as an activator of viral protein expression and virus production. In turn, promotes cell-to-cell spread as well as syncytia formation. This chain is Envelope glycoprotein J (gJ), found in Homo sapiens (Human).